We begin with the raw amino-acid sequence, 394 residues long: NAD(P)H-quinone oxidoreductase subunit H (394 aa).

This sequence belongs to the complex I 49 kDa subunit family. NDH-1 can be composed of about 15 different subunits; different subcomplexes with different compositions have been identified which probably have different functions.

The protein localises to the cellular thylakoid membrane. It carries out the reaction a plastoquinone + NADH + (n+1) H(+)(in) = a plastoquinol + NAD(+) + n H(+)(out). The enzyme catalyses a plastoquinone + NADPH + (n+1) H(+)(in) = a plastoquinol + NADP(+) + n H(+)(out). Functionally, NDH-1 shuttles electrons from an unknown electron donor, via FMN and iron-sulfur (Fe-S) centers, to quinones in the respiratory and/or the photosynthetic chain. The immediate electron acceptor for the enzyme in this species is believed to be plastoquinone. Couples the redox reaction to proton translocation, and thus conserves the redox energy in a proton gradient. Cyanobacterial NDH-1 also plays a role in inorganic carbon-concentration. In Prochlorococcus marinus (strain NATL1A), this protein is NAD(P)H-quinone oxidoreductase subunit H.